A 490-amino-acid chain; its full sequence is ATP synthase subunit beta, chloroplastic (490 aa).

Position 170–177 (170–177 (GGAGVGKT)) interacts with ATP.

It belongs to the ATPase alpha/beta chains family. In terms of assembly, F-type ATPases have 2 components, CF(1) - the catalytic core - and CF(0) - the membrane proton channel. CF(1) has five subunits: alpha(3), beta(3), gamma(1), delta(1), epsilon(1). CF(0) has four main subunits: a(1), b(1), b'(1) and c(9-12).

The protein localises to the plastid. Its subcellular location is the chloroplast thylakoid membrane. It catalyses the reaction ATP + H2O + 4 H(+)(in) = ADP + phosphate + 5 H(+)(out). Functionally, produces ATP from ADP in the presence of a proton gradient across the membrane. The catalytic sites are hosted primarily by the beta subunits. In Ipomoea obscura (Obscure morning glory), this protein is ATP synthase subunit beta, chloroplastic.